We begin with the raw amino-acid sequence, 221 residues long: Serine protease inhibitor 7 (221 aa).

The signal sequence occupies residues 1–22 (MKCLFLLCLCLVPIVVFSSTFT). Residues 23 to 28 (SKNPIN) constitute a propeptide that is removed on maturation. A Vacuolar targeting signal motif is present at residues 25-30 (NPINLP). Intrachain disulfides connect C76–C125 and C174–C191.

The protein belongs to the protease inhibitor I3 (leguminous Kunitz-type inhibitor) family. In terms of tissue distribution, tubers. Not detected in root, stem, leaves or flower bud.

Its subcellular location is the vacuole. Functionally, inhibitor of trypsin (serine protease). May protect the plant by inhibiting proteases of invading organisms. The sequence is that of Serine protease inhibitor 7 from Solanum tuberosum (Potato).